The primary structure comprises 240 residues: UDP-2,3-diacylglucosamine hydrolase (240 aa).

The Mn(2+) site is built by Asp-9, His-11, Asp-43, Asn-81, and His-116. 81–82 (NR) serves as a coordination point for substrate. Residues Asp-124, Ser-162, Lys-166, Lys-169, and His-197 each contribute to the substrate site. His-197 and His-199 together coordinate Mn(2+).

This sequence belongs to the LpxH family. It depends on Mn(2+) as a cofactor.

The protein localises to the cell inner membrane. The catalysed reaction is UDP-2-N,3-O-bis[(3R)-3-hydroxytetradecanoyl]-alpha-D-glucosamine + H2O = 2-N,3-O-bis[(3R)-3-hydroxytetradecanoyl]-alpha-D-glucosaminyl 1-phosphate + UMP + 2 H(+). It functions in the pathway glycolipid biosynthesis; lipid IV(A) biosynthesis; lipid IV(A) from (3R)-3-hydroxytetradecanoyl-[acyl-carrier-protein] and UDP-N-acetyl-alpha-D-glucosamine: step 4/6. In terms of biological role, hydrolyzes the pyrophosphate bond of UDP-2,3-diacylglucosamine to yield 2,3-diacylglucosamine 1-phosphate (lipid X) and UMP by catalyzing the attack of water at the alpha-P atom. Involved in the biosynthesis of lipid A, a phosphorylated glycolipid that anchors the lipopolysaccharide to the outer membrane of the cell. The sequence is that of UDP-2,3-diacylglucosamine hydrolase from Neisseria meningitidis serogroup C (strain 053442).